A 426-amino-acid chain; its full sequence is Cuticle-degrading serine protease (426 aa).

A signal peptide spans 1-21 (MLTNGLISLLAIAGLATNAFA). Positions 22 to 123 (GPIRKVSNAG…VEQDTVVTTY (102 aa)) are excised as a propeptide. An Inhibitor I9 domain is found at 39 to 122 (KYIVVLKKGL…YVEQDTVVTT (84 aa)). The Peptidase S8 domain occupies 130 to 426 (TWGLDRISHE…TNHQVTIVAS (297 aa)). Asp-164 functions as the Charge relay system in the catalytic mechanism. Residue Asn-178 is glycosylated (N-linked (GlcNAc...) asparagine). His-200 serves as the catalytic Charge relay system. Asn-252 is a glycosylation site (N-linked (GlcNAc...) asparagine). The active-site Charge relay system is Ser-353.

It belongs to the peptidase S8 family.

The protein localises to the secreted. Inhibited by PMSF, SSI, the peptide Phe-Val and by Phe, but not by EDTA. Functionally, hydrolyzes gelatin, casein, the chromogenic substrate azocoll and the cuticle of the nematode P.redivivus. Immobilizes P.redivivus. This is Cuticle-degrading serine protease from Orbilia oligospora (Nematode-trapping fungus).